A 402-amino-acid chain; its full sequence is Potassium channel subfamily K member 9 (402 aa).

The Cytoplasmic segment spans residues 1–8; the sequence is MKRQNVRT. A helical transmembrane segment spans residues 9–29; that stretch reads LSLIACTFTYLLVGAAVFDAL. The Extracellular portion of the chain corresponds to 30–88; sequence ESDHEMREEEKLKAEEVRLRGKYNISSDDYQQLELVILQSEPHRAGVQWKFAGSFYFAI. An N-linked (GlcNAc...) asparagine glycan is attached at N53. The segment at residues 89–101 is an intramembrane region (pore-forming); that stretch reads TVITTIGYGHAAP. K(+) is bound by residues T93, I94, G95, and Y96. Residues 93 to 98 are selectivity filter 1; it reads TIGYGH. The Extracellular segment spans residues 102–107; that stretch reads GTDAGK. The chain crosses the membrane as a helical span at residues 108 to 128; it reads AFCMFYAVLGIPLTLVMFQSL. The Cytoplasmic portion of the chain corresponds to 129-158; sequence GERMNTFVRYLLKRIKKCCGMRNTEVSMEN. Residues 159–179 traverse the membrane as a helical segment; the sequence is MVTVGFFSCMGTLCLGAAAFS. Topologically, residues 180–194 are extracellular; sequence QCEDWSFFHAYYYCF. The segment at residues 195–207 is an intramembrane region (pore-forming); sequence ITLTTIGFGDFVA. 4 residues coordinate K(+): T199, I200, G201, and F202. Residues 199–204 form a selectivity filter 2 region; that stretch reads TIGFGD. Topologically, residues 208-218 are extracellular; the sequence is LQAKGALQRKP. Residues 219-239 traverse the membrane as a helical segment; it reads FYVAFSFMYILVGLTVIGAFL. The Cytoplasmic segment spans residues 240–402; the sequence is NLVVLRFLTM…HRLHLRRKSI (163 aa). Positions 243–248 are X-gate; that stretch reads VLRFLT.

Belongs to the two pore domain potassium channel (TC 1.A.1.8) family. In terms of assembly, homodimer. Heterodimer with KCNK1. Heterodimer with KCNK3. Expressed in adrenal glands mainly in outer zona glomerulosa and inner zona medullaris. Expressed in retinal ganglion cells. Expressed in dentate gyrus (at protein level).

It localises to the cell membrane. The protein localises to the mitochondrion inner membrane. Its subcellular location is the cell projection. The protein resides in the dendrite. The enzyme catalyses K(+)(in) = K(+)(out). It carries out the reaction Na(+)(in) = Na(+)(out). Its activity is regulated as follows. Inhibited by NTS:NTSR1 signaling in dentate gyrus granule cells. K(+) channel that conducts voltage-dependent outward rectifying currents upon membrane depolarization. Voltage sensing is coupled to K(+) electrochemical gradient in an 'ion flux gating' mode where outward but not inward ion flow opens the gate. Changes ion selectivity and becomes permeable to Na(+) ions in response to extracellular acidification. Protonation of the pH sensor His-98 stabilizes C-type inactivation conformation likely converting the channel from outward K(+)-conducting, to inward Na(+)-conducting to nonconductive state. Homo- and heterodimerizes to form functional channels with distinct regulatory and gating properties. Allows K(+) currents with fast-gating kinetics important for the repolarization and hyperpolarization phases of action potentials. In granule neurons, hyperpolarizes the resting membrane potential to limit intrinsic neuronal excitability, but once the action potential threshold is reached, supports high-frequency action potential firing and increased neuronal excitability. Homomeric and/or heteromeric KCNK3:KCNK9 channels operate in cerebellar granule cells, whereas heteromeric KCNK1:KCNK9 enables currents in hippocampal dentate gyrus granule neurons. Dispensable for central chemosensory respiration i.e. breathing controlled by brainstem CO2/pH, it rather conducts pH-sensitive currents and controls the firing rate of serotonergic raphe neurons involved in potentiation of the respiratory chemoreflex. In retinal ganglion cells, mediates outward rectifying currents that regulate action potentials in response to acidification of the synaptic cleft. Involved in transmission of image-forming and nonimage-forming visual information in the retina. In adrenal gland, contributes to the maintenance of a hyperpolarized resting membrane potential of aldosterone-producing cells at zona glomerulosa and limits aldosterone release as part of a regulatory mechanism that controls arterial blood pressure and electrolyte homeostasis. This is Potassium channel subfamily K member 9 from Mus musculus (Mouse).